Reading from the N-terminus, the 173-residue chain is Translation initiation factor IF-3 (173 aa).

The protein belongs to the IF-3 family. As to quaternary structure, monomer.

It localises to the cytoplasm. In terms of biological role, IF-3 binds to the 30S ribosomal subunit and shifts the equilibrium between 70S ribosomes and their 50S and 30S subunits in favor of the free subunits, thus enhancing the availability of 30S subunits on which protein synthesis initiation begins. The chain is Translation initiation factor IF-3 from Methylobacterium sp. (strain 4-46).